The sequence spans 383 residues: Acetylornithine deacetylase (383 aa).

His-80 contributes to the Zn(2+) binding site. Asp-82 is a catalytic residue. Residue Asp-112 participates in Zn(2+) binding. Residue Glu-144 is part of the active site. Glu-145, Glu-169, and His-355 together coordinate Zn(2+).

This sequence belongs to the peptidase M20A family. ArgE subfamily. As to quaternary structure, homodimer. The cofactor is Zn(2+). Co(2+) is required as a cofactor. Requires glutathione as cofactor.

It is found in the cytoplasm. The enzyme catalyses N(2)-acetyl-L-ornithine + H2O = L-ornithine + acetate. It functions in the pathway amino-acid biosynthesis; L-arginine biosynthesis; L-ornithine from N(2)-acetyl-L-ornithine (linear): step 1/1. Functionally, catalyzes the hydrolysis of the amide bond of N(2)-acetylated L-amino acids. Cleaves the acetyl group from N-acetyl-L-ornithine to form L-ornithine, an intermediate in L-arginine biosynthesis pathway, and a branchpoint in the synthesis of polyamines. The chain is Acetylornithine deacetylase from Salmonella paratyphi A (strain ATCC 9150 / SARB42).